We begin with the raw amino-acid sequence, 508 residues long: Hydroxymethylglutaryl-CoA synthase, mitochondrial (508 aa).

Residues 1-37 (MQRLLTPVRQVLQVKRVMQEASLLPARLLPAAHPSFS) constitute a mitochondrion transit peptide. Lys52 bears the N6-succinyllysine mark. Glu80 and Ala81 together coordinate (3S)-3-hydroxy-3-methylglutaryl-CoA. Residue Glu132 is the Proton donor/acceptor of the active site. Positions 166, 204, and 208 each coordinate (3S)-3-hydroxy-3-methylglutaryl-CoA. Residue Cys166 is the Acyl-thioester intermediate of the active site. Position 243 is an N6-acetyllysine (Lys243). N6-acetyllysine; alternate is present on Lys256. Lys256 bears the N6-succinyllysine; alternate mark. (3S)-3-hydroxy-3-methylglutaryl-CoA is bound by residues Ser258 and His301. His301 functions as the Proton donor/acceptor in the catalytic mechanism. Position 306 is an N6-acetyllysine (Lys306). Lys310 serves as a coordination point for (3S)-3-hydroxy-3-methylglutaryl-CoA. N6-acetyllysine; alternate is present on Lys310. Lys310 carries the N6-succinyllysine; alternate modification. Lys333 carries the post-translational modification N6-succinyllysine. Residues Lys342, Lys350, Lys354, and Lys358 each carry the N6-acetyllysine; alternate modification. Lys342, Lys350, Lys354, and Lys358 each carry N6-succinyllysine; alternate. 2 residues coordinate (3S)-3-hydroxy-3-methylglutaryl-CoA: Asn380 and Ser414. At Ser433 the chain carries Phosphoserine. Lys437 is subject to N6-acetyllysine. Position 440 is a phosphoserine (Ser440). Lys447 is modified (N6-acetyllysine; alternate). Lys447 bears the N6-succinyllysine; alternate mark. At Ser456 the chain carries Phosphoserine. At Lys473 the chain carries N6-acetyllysine; alternate. At Lys473 the chain carries N6-succinyllysine; alternate. Phosphoserine is present on Ser477.

This sequence belongs to the thiolase-like superfamily. HMG-CoA synthase family. Homodimer. In terms of processing, succinylated. Desuccinylated by SIRT5. Succinylation, at least at Lys-310, inhibits the enzymatic activity.

It is found in the mitochondrion. It carries out the reaction acetoacetyl-CoA + acetyl-CoA + H2O = (3S)-3-hydroxy-3-methylglutaryl-CoA + CoA + H(+). The protein operates within metabolic intermediate biosynthesis; (R)-mevalonate biosynthesis; (R)-mevalonate from acetyl-CoA: step 2/3. Catalyzes the first irreversible step in ketogenesis, condensing acetyl-CoA to acetoacetyl-CoA to form HMG-CoA, which is converted by HMG-CoA reductase (HMGCR) into mevalonate. In Bos taurus (Bovine), this protein is Hydroxymethylglutaryl-CoA synthase, mitochondrial (HMGCS2).